We begin with the raw amino-acid sequence, 75 residues long: Putative membrane protein insertion efficiency factor (75 aa).

Belongs to the UPF0161 family.

It is found in the cell membrane. Functionally, could be involved in insertion of integral membrane proteins into the membrane. This chain is Putative membrane protein insertion efficiency factor, found in Bacillus cytotoxicus (strain DSM 22905 / CIP 110041 / 391-98 / NVH 391-98).